A 401-amino-acid polypeptide reads, in one-letter code: Heat shock transcription factor, Y-linked (401 aa).

Residues 1–11 (MAHVSSETQDV) show a composition bias toward polar residues. The tract at residues 1-30 (MAHVSSETQDVSPKDELTASEASTRSPLCE) is disordered. A DNA-binding region spans residues 76–194 (LSLNFPRKLW…PQLLVRVKRR (119 aa)).

The protein belongs to the HSF family. Testis-specific. Present in Sertoli cells and spermatogenic cells (at protein level).

The protein resides in the nucleus. It is found in the cytoplasm. This chain is Heat shock transcription factor, Y-linked (HSFY1), found in Homo sapiens (Human).